The chain runs to 147 residues: Nucleoside diphosphate kinase (147 aa).

Residues lysine 11, phenylalanine 59, arginine 87, threonine 93, arginine 104, and asparagine 114 each contribute to the ATP site. Catalysis depends on histidine 117, which acts as the Pros-phosphohistidine intermediate.

It belongs to the NDK family. In terms of assembly, homotetramer. It depends on Mg(2+) as a cofactor.

Its subcellular location is the cytoplasm. The catalysed reaction is a 2'-deoxyribonucleoside 5'-diphosphate + ATP = a 2'-deoxyribonucleoside 5'-triphosphate + ADP. The enzyme catalyses a ribonucleoside 5'-diphosphate + ATP = a ribonucleoside 5'-triphosphate + ADP. Functionally, major role in the synthesis of nucleoside triphosphates other than ATP. The ATP gamma phosphate is transferred to the NDP beta phosphate via a ping-pong mechanism, using a phosphorylated active-site intermediate. The polypeptide is Nucleoside diphosphate kinase (Anaeromyxobacter dehalogenans (strain 2CP-1 / ATCC BAA-258)).